A 397-amino-acid chain; its full sequence is Tryptophan synthase beta chain (397 aa).

An N6-(pyridoxal phosphate)lysine modification is found at lysine 87.

This sequence belongs to the TrpB family. Tetramer of two alpha and two beta chains. The cofactor is pyridoxal 5'-phosphate.

The enzyme catalyses (1S,2R)-1-C-(indol-3-yl)glycerol 3-phosphate + L-serine = D-glyceraldehyde 3-phosphate + L-tryptophan + H2O. The protein operates within amino-acid biosynthesis; L-tryptophan biosynthesis; L-tryptophan from chorismate: step 5/5. Functionally, the beta subunit is responsible for the synthesis of L-tryptophan from indole and L-serine. The sequence is that of Tryptophan synthase beta chain from Escherichia coli O17:K52:H18 (strain UMN026 / ExPEC).